The following is a 376-amino-acid chain: Queuine tRNA-ribosyltransferase (376 aa).

Asp-93 acts as the Proton acceptor in catalysis. Residues 93–97, Asp-147, Gln-190, and Gly-217 contribute to the substrate site; that span reads DSGGF. The RNA binding stretch occupies residues 248–254; it reads GVGTPDD. Asp-267 (nucleophile) is an active-site residue. Positions 272 to 276 are RNA binding; important for wobble base 34 recognition; that stretch reads TRSGR.

This sequence belongs to the queuine tRNA-ribosyltransferase family. As to quaternary structure, homodimer. Within each dimer, one monomer is responsible for RNA recognition and catalysis, while the other monomer binds to the replacement base PreQ1.

The catalysed reaction is 7-aminomethyl-7-carbaguanine + guanosine(34) in tRNA = 7-aminomethyl-7-carbaguanosine(34) in tRNA + guanine. It functions in the pathway tRNA modification; tRNA-queuosine biosynthesis. Catalyzes the base-exchange of a guanine (G) residue with the queuine precursor 7-aminomethyl-7-deazaguanine (PreQ1) at position 34 (anticodon wobble position) in tRNAs with GU(N) anticodons (tRNA-Asp, -Asn, -His and -Tyr). Catalysis occurs through a double-displacement mechanism. The nucleophile active site attacks the C1' of nucleotide 34 to detach the guanine base from the RNA, forming a covalent enzyme-RNA intermediate. The proton acceptor active site deprotonates the incoming PreQ1, allowing a nucleophilic attack on the C1' of the ribose to form the product. After dissociation, two additional enzymatic reactions on the tRNA convert PreQ1 to queuine (Q), resulting in the hypermodified nucleoside queuosine (7-(((4,5-cis-dihydroxy-2-cyclopenten-1-yl)amino)methyl)-7-deazaguanosine). The polypeptide is Queuine tRNA-ribosyltransferase (Agrobacterium fabrum (strain C58 / ATCC 33970) (Agrobacterium tumefaciens (strain C58))).